The primary structure comprises 472 residues: Homeobox protein PKNOX2 (472 aa).

The tract at residues 1 to 62 (MMQHASPAPA…STPVPSAPID (62 aa)) is disordered. Positions 26–38 (DSPQMTATTQPPS) are enriched in polar residues. Positions 46 to 56 (SAPSAAASTPV) are enriched in low complexity. Residues 96–179 (GSECITSASF…MHSDNLLRND (84 aa)) form the MEIS N-terminal domain. The homeobox DNA-binding region spans 291–350 (KRGVLPKHATNIMRSWLFQHLMHPYPTEDEKRQIAAQTNLTLLQVNNWFVNARRRILQPM). Disordered stretches follow at residues 351 to 371 (LDAS…QHRP), 386 to 405 (QQQG…LDNL), and 423 to 472 (AAHD…DSLV). Basic residues predominate over residues 361–371 (KAKKIKSQHRP). The segment covering 396 to 405 (PDGSINLDNL) has biased composition (polar residues). Positions 429–454 (LDGTEEEDEDEMEEEEEEELEEEVDE) are enriched in acidic residues.

It belongs to the TALE/MEIS homeobox family.

The protein resides in the nucleus. This chain is Homeobox protein PKNOX2 (PKNOX2), found in Pongo abelii (Sumatran orangutan).